We begin with the raw amino-acid sequence, 926 residues long: DNA mismatch repair protein MutS (926 aa).

A disordered region spans residues M1 to Q67. Composition is skewed to polar residues over residues Q18–S44 and K57–Q67. An ATP-binding site is contributed by G726–S733.

The protein belongs to the DNA mismatch repair MutS family.

Functionally, this protein is involved in the repair of mismatches in DNA. It is possible that it carries out the mismatch recognition step. This protein has a weak ATPase activity. The polypeptide is DNA mismatch repair protein MutS (Prochlorococcus marinus (strain NATL1A)).